A 40-amino-acid chain; its full sequence is uncharacterized protein (40 aa).

This is an uncharacterized protein from Escherichia coli (Bacteriophage T4).